Reading from the N-terminus, the 411-residue chain is Dual-specificity RNA methyltransferase RlmN (411 aa).

The active-site Proton acceptor is E125. The Radical SAM core domain occupies 131-380; it reads EEGRGTLCIS…IRTPRGRDIL (250 aa). The cysteines at positions 138 and 383 are disulfide-linked. [4Fe-4S] cluster is bound by residues C145, C149, and C152. S-adenosyl-L-methionine-binding positions include 209-210, S241, 263-265, and N340; these read GE and SLH. The active-site S-methylcysteine intermediate is C383.

Belongs to the radical SAM superfamily. RlmN family. The cofactor is [4Fe-4S] cluster.

The protein resides in the cytoplasm. It carries out the reaction adenosine(2503) in 23S rRNA + 2 reduced [2Fe-2S]-[ferredoxin] + 2 S-adenosyl-L-methionine = 2-methyladenosine(2503) in 23S rRNA + 5'-deoxyadenosine + L-methionine + 2 oxidized [2Fe-2S]-[ferredoxin] + S-adenosyl-L-homocysteine. The catalysed reaction is adenosine(37) in tRNA + 2 reduced [2Fe-2S]-[ferredoxin] + 2 S-adenosyl-L-methionine = 2-methyladenosine(37) in tRNA + 5'-deoxyadenosine + L-methionine + 2 oxidized [2Fe-2S]-[ferredoxin] + S-adenosyl-L-homocysteine. Its function is as follows. Specifically methylates position 2 of adenine 2503 in 23S rRNA and position 2 of adenine 37 in tRNAs. m2A2503 modification seems to play a crucial role in the proofreading step occurring at the peptidyl transferase center and thus would serve to optimize ribosomal fidelity. This Brucella suis biovar 1 (strain 1330) protein is Dual-specificity RNA methyltransferase RlmN.